A 186-amino-acid polypeptide reads, in one-letter code: Elongation factor P (186 aa).

It belongs to the elongation factor P family.

The protein resides in the cytoplasm. It participates in protein biosynthesis; polypeptide chain elongation. Its function is as follows. Involved in peptide bond synthesis. Stimulates efficient translation and peptide-bond synthesis on native or reconstituted 70S ribosomes in vitro. Probably functions indirectly by altering the affinity of the ribosome for aminoacyl-tRNA, thus increasing their reactivity as acceptors for peptidyl transferase. This Streptococcus pneumoniae (strain Hungary19A-6) protein is Elongation factor P.